An 867-amino-acid chain; its full sequence is Pentatricopeptide repeat-containing protein At2g39230, mitochondrial (867 aa).

Residues 1 to 49 constitute a mitochondrion transit peptide; sequence MTTFMVSKRFRPPIFLHRFINPKPISSQTRFLHPPDNQSRDISDSTTET. The segment at 27 to 74 is disordered; it reads SQTRFLHPPDNQSRDISDSTTETISTLEFPHKTSVPNHSPLTSTSETE. Polar residues predominate over residues 60–72; that stretch reads SVPNHSPLTSTSE. PPR repeat units lie at residues 168–202, 203–237, 238–272, 273–307, 309–343, 344–378, 379–413, 414–444, 448–482, 483–517, 518–552, 553–588, 589–623, 624–658, 659–693, 694–728, 729–763, 764–798, and 799–833; these read TPRA…KVVP, FVPY…GVAG, DNVT…GAEP, DGLL…LGVP, SQET…GIPM, SVIA…GLAP, DKVM…RIAP, SSVL…SFES, HGFM…GIEP, NVVF…GLEP, NNFT…NFEA, NEVI…RYSM, SCTS…GKSP, NVVT…ELKL, DLPA…GLMP, NVSV…GISC, DLFT…GIVP, DEIL…DVTP, and NVLL…GIVH.

This sequence belongs to the PPR family. P subfamily. In terms of tissue distribution, expressed in lateral organ junctions and shoot apical meristem (SAM).

Its subcellular location is the mitochondrion. Functionally, involved in lateral organ development and boundary demarcation. The polypeptide is Pentatricopeptide repeat-containing protein At2g39230, mitochondrial (LOJ) (Arabidopsis thaliana (Mouse-ear cress)).